The sequence spans 237 residues: Ribosomal RNA small subunit methyltransferase G (237 aa).

Residues Gly78, Phe83, 129 to 130 (AE), and Arg148 contribute to the S-adenosyl-L-methionine site.

Belongs to the methyltransferase superfamily. RNA methyltransferase RsmG family.

It localises to the cytoplasm. Its function is as follows. Specifically methylates the N7 position of a guanine in 16S rRNA. The sequence is that of Ribosomal RNA small subunit methyltransferase G from Streptococcus thermophilus (strain ATCC BAA-491 / LMD-9).